Consider the following 254-residue polypeptide: uncharacterized protein (254 aa).

The disordered stretch occupies residues 163–182 (PNKHTQHKRSTRRTSPKDYN). Over residues 166–176 (HTQHKRSTRRT) the composition is skewed to basic residues. A helical membrane pass occupies residues 207–227 (AHSAWILIIIIIIIVVILFFF).

The protein belongs to the RL11 family.

The protein localises to the host membrane. This is an uncharacterized protein from Human cytomegalovirus (strain Merlin) (HHV-5).